Consider the following 361-residue polypeptide: Chorismate synthase (361 aa).

Residues Arg-48 and Arg-54 each contribute to the NADP(+) site. Residues 125-127, 238-239, Gly-278, 293-297, and Arg-319 contribute to the FMN site; these read RSS, NA, and KPTSS.

It belongs to the chorismate synthase family. In terms of assembly, homotetramer. It depends on FMNH2 as a cofactor.

It carries out the reaction 5-O-(1-carboxyvinyl)-3-phosphoshikimate = chorismate + phosphate. It functions in the pathway metabolic intermediate biosynthesis; chorismate biosynthesis; chorismate from D-erythrose 4-phosphate and phosphoenolpyruvate: step 7/7. Catalyzes the anti-1,4-elimination of the C-3 phosphate and the C-6 proR hydrogen from 5-enolpyruvylshikimate-3-phosphate (EPSP) to yield chorismate, which is the branch point compound that serves as the starting substrate for the three terminal pathways of aromatic amino acid biosynthesis. This reaction introduces a second double bond into the aromatic ring system. The polypeptide is Chorismate synthase (Edwardsiella ictaluri (strain 93-146)).